A 192-amino-acid polypeptide reads, in one-letter code: Bifunctional protein PyrR (192 aa).

Residues 107 to 119 (VVLVDDVLFSGRT) carry the PRPP-binding motif.

Belongs to the purine/pyrimidine phosphoribosyltransferase family. PyrR subfamily.

The catalysed reaction is UMP + diphosphate = 5-phospho-alpha-D-ribose 1-diphosphate + uracil. In terms of biological role, regulates the transcription of the pyrimidine nucleotide (pyr) operon in response to exogenous pyrimidines. Also displays a weak uracil phosphoribosyltransferase activity which is not physiologically significant. This chain is Bifunctional protein PyrR, found in Corynebacterium efficiens (strain DSM 44549 / YS-314 / AJ 12310 / JCM 11189 / NBRC 100395).